A 579-amino-acid polypeptide reads, in one-letter code: Folliculin (579 aa).

Positions 32-52 (GASCGDSIGQGEQAEDEEMGI) are disordered. The uDENN FLCN/SMCR8-type domain maps to 86 to 242 (RSLAAGHPGY…RNGNAARSLT (157 aa)). The region spanning 337 to 491 (NMVQRRMGVF…ILNKIEAALS (155 aa)) is the cDENN FLCN/SMCR8-type domain. In terms of domain architecture, dDENN FLCN/SMCR8-type spans 493–558 (ENLSMDVVDQ…LLKFWMTGLS (66 aa)).

The protein belongs to the folliculin family. In terms of assembly, component of the lysosomal folliculin complex (LFC).

It is found in the lysosome membrane. It localises to the cytoplasm. The protein resides in the cytosol. The protein localises to the cell projection. Its subcellular location is the cilium. It is found in the cytoskeleton. It localises to the microtubule organizing center. The protein resides in the centrosome. The protein localises to the spindle. Its subcellular location is the nucleus. With respect to regulation, GTPase-activating activity is inhibited in the folliculin complex (LFC), which stabilizes the GDP-bound state of RagA/RRAGA (or RagB/RRAGB), because Arg-164 is located far from the RagC/RRAGC or RagD/RRAGD nucleotide pocket. Disassembly of the LFC complex upon amino acid restimulation liberates the GTPase-activating activity. Multi-functional protein, involved in both the cellular response to amino acid availability and in the regulation of glycolysis. GTPase-activating protein that plays a key role in the cellular response to amino acid availability through regulation of the non-canonical mTORC1 signaling cascade controlling the MiT/TFE factors tfeb and tfe3. Activates mTORC1 by acting as a GTPase-activating protein: specifically stimulates GTP hydrolysis by RagC/RRAGC or RagD/RRAGD, promoting the conversion to the GDP-bound state of RagC/RRAGC or RagD/RRAGD, and thereby activating the kinase activity of mTORC1. The GTPase-activating activity is inhibited during starvation and activated in presence of nutrients. Acts as a key component for non-canonical mTORC1-dependent control of the MiT/TFE factors tfeb and tfe3, while it is not involved in mTORC1-dependent phosphorylation of canonical RPS6KB1/S6K1 and EIF4EBP1/4E-BP1. In low-amino acid conditions, the lysosomal folliculin complex (LFC) is formed on the membrane of lysosomes, which inhibits the GTPase-activating activity of flcn, inactivates mTORC1 and maximizes nuclear translocation of tfeb and tfe3. Upon amino acid restimulation, RagA/RRAGA (or RagB/RRAGB) nucleotide exchange promotes disassembly of the LFC complex and liberates the GTPase-activating activity of flcn, leading to activation of mTORC1 and subsequent cytoplasmic retention of tfeb and tfe3. Required for the exit of hematopoietic stem cell from pluripotency by promoting mTOR-dependent cytoplasmic retention of tfe3, thereby increasing Wnt signaling. Acts as an inhibitor of browning of adipose tissue by regulating mTOR-dependent cytoplasmic retention of tfe3. In response to flow stress, regulates STK11/LKB1 accumulation and mTORC1 activation through primary cilia. Required for starvation-induced perinuclear clustering of lysosomes by promoting association of rilp with its effector rab34. Involved in the control of embryonic stem cells differentiation; together with lamtor1 it is necessary to recruit and activate RagC/RRAGC and RagD/RRAGD at the lysosomes, and to induce exit of embryonic stem cells from pluripotency via non-canonical, mTOR-independent tfe3 inactivation. Regulates glycolysis by binding to lactate dehydrogenase ldha, acting as an uncompetitive inhibitor. The chain is Folliculin from Xenopus tropicalis (Western clawed frog).